A 39-amino-acid chain; its full sequence is Cytochrome b559 subunit beta (39 aa).

The chain crosses the membrane as a helical span at residues 14 to 30; sequence WLAIHGLAVPTVFSLGS. His18 is a heme binding site.

This sequence belongs to the PsbE/PsbF family. In terms of assembly, heterodimer of an alpha subunit and a beta subunit. PSII is composed of 1 copy each of membrane proteins PsbA, PsbB, PsbC, PsbD, PsbE, PsbF, PsbH, PsbI, PsbJ, PsbK, PsbL, PsbM, PsbT, PsbX, PsbY, PsbZ, Psb30/Ycf12, at least 3 peripheral proteins of the oxygen-evolving complex and a large number of cofactors. It forms dimeric complexes. Heme b serves as cofactor.

Its subcellular location is the plastid. It localises to the chloroplast thylakoid membrane. In terms of biological role, this b-type cytochrome is tightly associated with the reaction center of photosystem II (PSII). PSII is a light-driven water:plastoquinone oxidoreductase that uses light energy to abstract electrons from H(2)O, generating O(2) and a proton gradient subsequently used for ATP formation. It consists of a core antenna complex that captures photons, and an electron transfer chain that converts photonic excitation into a charge separation. In Huperzia lucidula (Shining clubmoss), this protein is Cytochrome b559 subunit beta.